The primary structure comprises 470 residues: Cysteine--tRNA ligase 1 (470 aa).

Cys-29 provides a ligand contact to Zn(2+). The 'HIGH' region signature appears at 31-41; sequence PTVYDDAHIGN. Zn(2+) is bound by residues Cys-221, His-246, and Glu-250. The 'KMSKS' region motif lies at 279–283; it reads KMSKS. An ATP-binding site is contributed by Lys-282.

This sequence belongs to the class-I aminoacyl-tRNA synthetase family. In terms of assembly, monomer. Zn(2+) is required as a cofactor.

The protein localises to the cytoplasm. It catalyses the reaction tRNA(Cys) + L-cysteine + ATP = L-cysteinyl-tRNA(Cys) + AMP + diphosphate. In Burkholderia lata (strain ATCC 17760 / DSM 23089 / LMG 22485 / NCIMB 9086 / R18194 / 383), this protein is Cysteine--tRNA ligase 1.